A 290-amino-acid chain; its full sequence is Arylamine N-acetyltransferase 2 (290 aa).

The active-site Acyl-thioester intermediate is cysteine 68. Residues threonine 103 and glycine 104 each contribute to the CoA site. Substrate is bound at residue 106 to 107 (VH). Active-site residues include histidine 107 and aspartate 122. 3 residues coordinate CoA: tyrosine 208, threonine 214, and serine 287.

It belongs to the arylamine N-acetyltransferase family.

The protein resides in the cytoplasm. It catalyses the reaction an arylamine + acetyl-CoA = an N-acetylarylamine + CoA. The catalysed reaction is an N-hydroxyarylamine + acetyl-CoA = an N-acetoxyarylamine + CoA. Its function is as follows. Catalyzes the N- or O-acetylation of various arylamine and heterocyclic amine substrates. Participates in the detoxification of a plethora of hydrazine and arylamine drugs, and is able to bioactivate several known carcinogens. This chain is Arylamine N-acetyltransferase 2 (NAT2), found in Homo sapiens (Human).